The primary structure comprises 418 residues: Hydroxysteroid dehydrogenase-like protein 2 (418 aa).

Residues 17 to 23 (GASRGIG), Lys-42, and Asp-74 each bind NADP(+). Lys-42 is subject to N6-(2-hydroxyisobutyryl)lysine. N6-acetyllysine is present on Lys-116. Residue Tyr-168 is the Proton acceptor of the active site. Lys-172 contributes to the NADP(+) binding site. The SCP2 domain maps to 306 to 415 (RSGAVEETFR…KLEKLMNQMN (110 aa)). Lys-318 carries the post-translational modification N6-succinyllysine.

It belongs to the short-chain dehydrogenases/reductases (SDR) family. In terms of tissue distribution, ubiquitous.

Its subcellular location is the peroxisome. The protein localises to the mitochondrion. Functionally, has apparently no steroid dehydrogenase activity. Controls bile acid (BA) and lipid metabolism in response to nutritional cues. This is Hydroxysteroid dehydrogenase-like protein 2 from Homo sapiens (Human).